The sequence spans 102 residues: Protein V2 (102 aa).

In terms of biological role, may be involved in the regulation of ssDNA versus dsDNA levels. The chain is Protein V2 from Beet curly top virus (strain California/Logan) (BCTV).